A 433-amino-acid polypeptide reads, in one-letter code: Protein arginine N-methyltransferase 2 (433 aa).

The segment at 1–20 is disordered; sequence MATSGDCPRSESQGEEPAEC. 2 interaction with ESR1 regions span residues 1-277 and 133-275; these read MATS…SALK and KESL…NLSA. The 60-residue stretch at 30–89 folds into the SH3 domain; that stretch reads VQPEEFVAIADYAATDETQLSFLRGEKILILRQTTADWWWGERAGCCGYIPANHVGKHVD. R61 and R72 each carry asymmetric dimethylarginine. The tract at residues 83–207 is interaction with RB1; the sequence is HVGKHVDEYD…DVVLPEKVDV (125 aa). The 334-residue stretch at 99–432 folds into the SAM-dependent MTase PRMT-type domain; that stretch reads DEEYFGSYGT…KVGEKVFPIW (334 aa). S-adenosyl-L-methionine-binding residues include H112, R121, G145, E168, and E197. Active-site residues include E211 and E220.

This sequence belongs to the class I-like SAM-binding methyltransferase superfamily. Protein arginine N-methyltransferase family. Self-associates. Interacts with RB1 and E2F1. Interacts with NCOA6 coactivator. Interacts (via SH3 domain) with PRMT8. Interacts with AR. Interacts with NFKBIA. Interacts with ESR1, ESR2, PGR, PPARG, RARA, RXRA and THRB. Interacts with HNRNPUL1. As to expression, widely expressed. Highly expressed in androgen target organs such as heart, prostate, skeletal muscle, ovary and spinal cord.

The protein localises to the cytoplasm. It localises to the nucleus. It is found in the nucleolus. The catalysed reaction is L-arginyl-[protein] + 2 S-adenosyl-L-methionine = N(omega),N(omega)-dimethyl-L-arginyl-[protein] + 2 S-adenosyl-L-homocysteine + 2 H(+). In terms of biological role, arginine methyltransferase that methylates the guanidino nitrogens of arginyl residues in proteins such as STAT3, FBL, histone H4. Acts as a coactivator (with NCOA2) of the androgen receptor (AR)-mediated transactivation. Acts as a coactivator (with estrogen) of estrogen receptor (ER)-mediated transactivation. Enhances PGR, PPARG, RARA-mediated transactivation. May inhibit NF-kappa-B transcription and promote apoptosis. Represses E2F1 transcriptional activity (in a RB1-dependent manner). May be involved in growth regulation. This chain is Protein arginine N-methyltransferase 2 (PRMT2), found in Homo sapiens (Human).